Reading from the N-terminus, the 306-residue chain is Curved DNA-binding protein (306 aa).

The J domain occupies 5–69 (DYYAIMGVKP…QRRAEYDQMW (65 aa)).

It localises to the cytoplasm. It is found in the nucleoid. In terms of biological role, DNA-binding protein that preferentially recognizes a curved DNA sequence. It is probably a functional analog of DnaJ; displays overlapping activities with DnaJ, but functions under different conditions, probably acting as a molecular chaperone in an adaptive response to environmental stresses other than heat shock. Lacks autonomous chaperone activity; binds native substrates and targets them for recognition by DnaK. Its activity is inhibited by the binding of CbpM. The chain is Curved DNA-binding protein from Shigella dysenteriae serotype 1 (strain Sd197).